The chain runs to 248 residues: NAD(P)H-quinone oxidoreductase subunit K 1 (248 aa).

Positions Met-1–Ser-2 are excised as a propeptide. The [4Fe-4S] cluster site is built by Cys-62, Cys-63, Cys-127, and Cys-158. Positions Met-228–Gly-248 are disordered. The segment covering Leu-236–Gly-248 has biased composition (polar residues).

It belongs to the complex I 20 kDa subunit family. NDH-1 can be composed of about 15 different subunits; different subcomplexes with different compositions have been identified which probably have different functions. It depends on [4Fe-4S] cluster as a cofactor.

The protein resides in the cellular thylakoid membrane. It catalyses the reaction a plastoquinone + NADH + (n+1) H(+)(in) = a plastoquinol + NAD(+) + n H(+)(out). The enzyme catalyses a plastoquinone + NADPH + (n+1) H(+)(in) = a plastoquinol + NADP(+) + n H(+)(out). Its function is as follows. NDH-1 shuttles electrons from an unknown electron donor, via FMN and iron-sulfur (Fe-S) centers, to quinones in the respiratory and/or the photosynthetic chain. The immediate electron acceptor for the enzyme in this species is believed to be plastoquinone. Couples the redox reaction to proton translocation, and thus conserves the redox energy in a proton gradient. Cyanobacterial NDH-1 also plays a role in inorganic carbon-concentration. The polypeptide is NAD(P)H-quinone oxidoreductase subunit K 1 (Synechocystis sp. (strain ATCC 27184 / PCC 6803 / Kazusa)).